Reading from the N-terminus, the 376-residue chain is Cyclin-dependent kinase 9-A (376 aa).

The Protein kinase domain occupies 19 to 319; it reads YERLAKIGQG…SDDALNNDFF (301 aa). ATP-binding positions include 25–33 and Lys48; that span reads IGQGTFGEV. Catalysis depends on Asp153, which acts as the Proton acceptor. The segment at 345–376 is disordered; sequence PPRRRGGHMPQQPANQARNPAATNQSEFERVF. The span at 354–369 shows a compositional bias: low complexity; sequence PQQPANQARNPAATNQ.

The protein belongs to the protein kinase superfamily. CMGC Ser/Thr protein kinase family. CDC2/CDKX subfamily. As to quaternary structure, associates with cyclin-T to form P-TEFb.

The protein resides in the nucleus. The enzyme catalyses L-seryl-[protein] + ATP = O-phospho-L-seryl-[protein] + ADP + H(+). The catalysed reaction is L-threonyl-[protein] + ATP = O-phospho-L-threonyl-[protein] + ADP + H(+). It catalyses the reaction [DNA-directed RNA polymerase] + ATP = phospho-[DNA-directed RNA polymerase] + ADP + H(+). Member of the cyclin-dependent kinase pair (CDK9/cyclin-T) complex, also called positive transcription elongation factor B (P-TEFb), which is proposed to facilitate the transition from abortive to production elongation by phosphorylating the CTD (C-terminal domain) of the large subunit of RNA polymerase II (RNAP II) and SUPT5H. The polypeptide is Cyclin-dependent kinase 9-A (cdk9-a) (Xenopus laevis (African clawed frog)).